We begin with the raw amino-acid sequence, 251 residues long: 3-dehydroquinate dehydratase (251 aa).

3-dehydroquinate-binding positions include 47 to 49 (EWR) and Arg-83. Residue His-144 is the Proton donor/acceptor of the active site. Catalysis depends on Lys-171, which acts as the Schiff-base intermediate with substrate. The 3-dehydroquinate site is built by Arg-214, Ser-233, and Gln-237.

Belongs to the type-I 3-dehydroquinase family. Homodimer.

It carries out the reaction 3-dehydroquinate = 3-dehydroshikimate + H2O. It participates in metabolic intermediate biosynthesis; chorismate biosynthesis; chorismate from D-erythrose 4-phosphate and phosphoenolpyruvate: step 3/7. Its function is as follows. Involved in the third step of the chorismate pathway, which leads to the biosynthesis of aromatic amino acids. Catalyzes the cis-dehydration of 3-dehydroquinate (DHQ) and introduces the first double bond of the aromatic ring to yield 3-dehydroshikimate. In Klebsiella pneumoniae (strain 342), this protein is 3-dehydroquinate dehydratase.